The chain runs to 183 residues: SsrA-binding protein (183 aa).

Residues 1-27 (MAKKATLVDHGAAKGKKKAQSKVSKKN) form a disordered region. A compositionally biased stretch (basic residues) spans 13–27 (AKGKKKAQSKVSKKN).

It belongs to the SmpB family.

Its subcellular location is the cytoplasm. Its function is as follows. Required for rescue of stalled ribosomes mediated by trans-translation. Binds to transfer-messenger RNA (tmRNA), required for stable association of tmRNA with ribosomes. tmRNA and SmpB together mimic tRNA shape, replacing the anticodon stem-loop with SmpB. tmRNA is encoded by the ssrA gene; the 2 termini fold to resemble tRNA(Ala) and it encodes a 'tag peptide', a short internal open reading frame. During trans-translation Ala-aminoacylated tmRNA acts like a tRNA, entering the A-site of stalled ribosomes, displacing the stalled mRNA. The ribosome then switches to translate the ORF on the tmRNA; the nascent peptide is terminated with the 'tag peptide' encoded by the tmRNA and targeted for degradation. The ribosome is freed to recommence translation, which seems to be the essential function of trans-translation. In Corynebacterium kroppenstedtii (strain DSM 44385 / JCM 11950 / CIP 105744 / CCUG 35717), this protein is SsrA-binding protein.